Reading from the N-terminus, the 606-residue chain is Probable translation initiation factor IF-2 (606 aa).

The tr-type G domain maps to Ile11–Lys230. The tract at residues Gly20–Thr27 is G1. Residue Gly20–Thr27 participates in GTP binding. Residues Glu45–His49 form a G2 region. Positions Asp85–Gly88 are G3. Residues Asp85–His89 and Asn139–Asp142 each bind GTP. Positions Asn139–Asp142 are G4. The tract at residues Ser207–Lys209 is G5.

This sequence belongs to the TRAFAC class translation factor GTPase superfamily. Classic translation factor GTPase family. IF-2 subfamily.

Its function is as follows. Function in general translation initiation by promoting the binding of the formylmethionine-tRNA to ribosomes. Seems to function along with eIF-2. The sequence is that of Probable translation initiation factor IF-2 from Staphylothermus marinus (strain ATCC 43588 / DSM 3639 / JCM 9404 / F1).